The sequence spans 375 residues: Queuine tRNA-ribosyltransferase (375 aa).

Asp-89 serves as the catalytic Proton acceptor. Substrate contacts are provided by residues Asp-89–Phe-93, Asp-143, Gln-187, and Gly-214. The interval Gly-245–Asp-251 is RNA binding. Asp-264 serves as the catalytic Nucleophile. The tract at residues Thr-269–Arg-273 is RNA binding; important for wobble base 34 recognition. Cys-302, Cys-304, Cys-307, and His-333 together coordinate Zn(2+).

Belongs to the queuine tRNA-ribosyltransferase family. In terms of assembly, homodimer. Within each dimer, one monomer is responsible for RNA recognition and catalysis, while the other monomer binds to the replacement base PreQ1. Zn(2+) is required as a cofactor.

The catalysed reaction is 7-aminomethyl-7-carbaguanine + guanosine(34) in tRNA = 7-aminomethyl-7-carbaguanosine(34) in tRNA + guanine. It functions in the pathway tRNA modification; tRNA-queuosine biosynthesis. Catalyzes the base-exchange of a guanine (G) residue with the queuine precursor 7-aminomethyl-7-deazaguanine (PreQ1) at position 34 (anticodon wobble position) in tRNAs with GU(N) anticodons (tRNA-Asp, -Asn, -His and -Tyr). Catalysis occurs through a double-displacement mechanism. The nucleophile active site attacks the C1' of nucleotide 34 to detach the guanine base from the RNA, forming a covalent enzyme-RNA intermediate. The proton acceptor active site deprotonates the incoming PreQ1, allowing a nucleophilic attack on the C1' of the ribose to form the product. After dissociation, two additional enzymatic reactions on the tRNA convert PreQ1 to queuine (Q), resulting in the hypermodified nucleoside queuosine (7-(((4,5-cis-dihydroxy-2-cyclopenten-1-yl)amino)methyl)-7-deazaguanosine). The sequence is that of Queuine tRNA-ribosyltransferase from Salmonella typhi.